We begin with the raw amino-acid sequence, 464 residues long: Asparagine--tRNA ligase (464 aa).

This sequence belongs to the class-II aminoacyl-tRNA synthetase family. Homodimer.

The protein localises to the cytoplasm. It carries out the reaction tRNA(Asn) + L-asparagine + ATP = L-asparaginyl-tRNA(Asn) + AMP + diphosphate + H(+). This is Asparagine--tRNA ligase from Xanthomonas euvesicatoria pv. vesicatoria (strain 85-10) (Xanthomonas campestris pv. vesicatoria).